The primary structure comprises 178 residues: High mobility group B protein 1 (178 aa).

2 stretches are compositionally biased toward basic and acidic residues: residues Met-1–Lys-52 and Ala-101–Met-118. Disordered regions lie at residues Met-1–Ala-59 and Asn-75–Asp-178. The segment at residues Pro-53–Asn-122 is a DNA-binding region (HMG box). A phosphoserine mark is found at Ser-137 and Ser-146. The span at Asn-140 to Asp-178 shows a compositional bias: acidic residues.

This sequence belongs to the HMGB family. Expressed in cotyledons, roots, stems, leaves and flowers (excluding pedicels).

Its subcellular location is the nucleus. Binds preferentially double-stranded DNA. Modulates general plant growth and stress tolerance. Confers sensitivity to salt and genotoxic (methyl methanesulfonate, MMS) stresses. This Arabidopsis thaliana (Mouse-ear cress) protein is High mobility group B protein 1 (HMGB1).